We begin with the raw amino-acid sequence, 105 residues long: MQYLAAYALVALSGKTPSKAAVEAVLKAAGVAVDASRVDAVFQELEGKSFDALVAEGRAKLVGSGSAAPAAAASTAAAAAAVVAEAKKEEPEEEADDDMGFGLFD.

The segment at 84-105 is disordered; it reads AEAKKEEPEEEADDDMGFGLFD.

It belongs to the eukaryotic ribosomal protein P1/P2 family. In terms of assembly, P1 and P2 exist as dimers at the large ribosomal subunit. Post-translationally, phosphorylated.

Its function is as follows. Plays an important role in the elongation step of protein synthesis. The polypeptide is Large ribosomal subunit protein P2 (ARP-1) (Leishmania donovani).